The sequence spans 293 residues: Protease HtpX homolog (293 aa).

2 consecutive transmembrane segments (helical) span residues 6-26 (VAVM…LIGG) and 28-48 (SGMV…YWNS). Histidine 130 contacts Zn(2+). Glutamate 131 is a catalytic residue. Residue histidine 134 coordinates Zn(2+). The next 2 helical transmembrane spans lie at 145 to 165 (LTAT…FFGG) and 172 to 192 (PLGA…AMMV). Glutamate 201 provides a ligand contact to Zn(2+).

This sequence belongs to the peptidase M48B family. Zn(2+) serves as cofactor.

It is found in the cell inner membrane. The chain is Protease HtpX homolog from Rhodospirillum rubrum (strain ATCC 11170 / ATH 1.1.1 / DSM 467 / LMG 4362 / NCIMB 8255 / S1).